Here is an 84-residue protein sequence, read N- to C-terminus: uncharacterized protein (84 aa).

Residues 25–45 (ILMTVAGFIIAFAILVFQISF) traverse the membrane as a helical segment.

Its subcellular location is the membrane. This is an uncharacterized protein from Bacillus anthracis.